A 114-amino-acid chain; its full sequence is Large ribosomal subunit protein uL22c (114 aa).

Belongs to the universal ribosomal protein uL22 family. As to quaternary structure, part of the 50S ribosomal subunit.

The protein localises to the plastid. It localises to the chloroplast. This protein binds specifically to 23S rRNA. In terms of biological role, the globular domain of the protein is located near the polypeptide exit tunnel on the outside of the subunit, while an extended beta-hairpin is found that lines the wall of the exit tunnel in the center of the 70S ribosome. The protein is Large ribosomal subunit protein uL22c (rpl22) of Gracilaria tenuistipitata var. liui (Red alga).